Here is a 925-residue protein sequence, read N- to C-terminus: Serine/threonine-protein kinase PLK4 (925 aa).

The Protein kinase domain occupies 12–265; the sequence is FKVGNLLGKG…LSSVLDHPFM (254 aa). Residues 18-26 and Lys41 contribute to the ATP site; that span reads LGKGSFAGV. 2 positions are modified to N6-acetyllysine: Lys45 and Lys46. The active-site Proton acceptor is Asp136. 2 disordered regions span residues 262 to 283 and 328 to 394; these read HPFM…EDSM and KNSS…KTYS. Over residues 330-341 the composition is skewed to low complexity; the sequence is SSDFSSGDGSNF. The span at 342 to 353 shows a compositional bias: polar residues; it reads CTQWGNPEQEAN. A compositionally biased stretch (basic and acidic residues) spans 359 to 369; the sequence is RVIEDAEERPH. Residues 381–391 show a composition bias toward polar residues; sequence RASPSNQSRAK. Ser400 carries the phosphoserine modification. A disordered region spans residues 517–538; it reads EVMPQEPGLHPHSEQSKNRSME. A compositionally biased stretch (basic and acidic residues) spans 525 to 536; that stretch reads LHPHSEQSKNRS. Residues 547 to 660 form the Cryptic POLO box 1 (CPB1) domain; the sequence is TLRSITSPLI…SRFIQLVRSK (114 aa). The Cryptic POLO box 2 (CPB2) domain maps to 661–774; the sequence is TPKITYFTRY…GRKPGNTSSP (114 aa). At Ser778 the chain carries Phosphoserine. In terms of domain architecture, POLO box spans 841 to 919; that stretch reads QLLKSVFVKN…LSSILLMFSN (79 aa).

Belongs to the protein kinase superfamily. Ser/Thr protein kinase family. CDC5/Polo subfamily. Homodimer. Interacts with CEP152 (via N-terminus). Interacts with CEP78; this interaction may be important for proper PLK4 localization to the centriole and PLK4-induced overduplication of centrioles. Interacts with CEP131. Interacts simultaneously with TENT5C and CEP192. Interacts with TENT5C; this interaction leads to the TENT5C recruitment in the centrosome. Interacts with CEP85; this interaction may be important in cell migration and centriole assembly. Post-translationally, ubiquitinated; leading to its degradation by the proteasome. Deubiquitinated by USP54; leading to PLK4 stabilization. Tyrosine-phosphorylated by TEC. In terms of processing, acetylation by KAT2A and KAT2B impairs kinase activity by shifting the kinase to an inactive conformation. As to expression, expressed in tissues associated with mitotic and meiotic cell division. Highly expressed in testis.

Its subcellular location is the cytoplasm. The protein resides in the cytoskeleton. It is found in the microtubule organizing center. The protein localises to the centrosome. It localises to the centriole. Its subcellular location is the nucleus. The protein resides in the nucleolus. It is found in the cleavage furrow. It carries out the reaction L-seryl-[protein] + ATP = O-phospho-L-seryl-[protein] + ADP + H(+). It catalyses the reaction L-threonyl-[protein] + ATP = O-phospho-L-threonyl-[protein] + ADP + H(+). Functionally, serine/threonine-protein kinase that plays a central role in centriole duplication. Able to trigger procentriole formation on the surface of the parental centriole cylinder, leading to the recruitment of centriole biogenesis proteins such as SASS6, CPAP, CCP110, CEP135 and gamma-tubulin. When overexpressed, it is able to induce centrosome amplification through the simultaneous generation of multiple procentrioles adjoining each parental centriole during S phase. Phosphorylates 'Ser-151' of FBXW5 during the G1/S transition, leading to inhibit FBXW5 ability to ubiquitinate SASS6. Its central role in centriole replication suggests a possible role in tumorigenesis, centrosome aberrations being frequently observed in tumors. Phosphorylates CDC25C and CHEK2. Also involved in deuterosome-mediated centriole amplification in multiciliated that can generate more than 100 centrioles. Also involved in trophoblast differentiation by phosphorylating HAND1, leading to disrupt the interaction between HAND1 and MDFIC and activate HAND1. Required for the recruitment of STIL to the centriole and for STIL-mediated centriole amplification. Phosphorylates CEP131 at 'Ser-78' and PCM1 at 'Ser-372' which is essential for proper organization and integrity of centriolar satellites. This is Serine/threonine-protein kinase PLK4 from Mus musculus (Mouse).